We begin with the raw amino-acid sequence, 424 residues long: UPF0415 protein C7orf25 homolog (424 aa).

This sequence belongs to the UPF0415 family.

This chain is UPF0415 protein C7orf25 homolog, found in Xenopus tropicalis (Western clawed frog).